The sequence spans 247 residues: Probable transcriptional regulatory protein HRM2_04000 (247 aa).

This sequence belongs to the TACO1 family.

It is found in the cytoplasm. In Desulforapulum autotrophicum (strain ATCC 43914 / DSM 3382 / VKM B-1955 / HRM2) (Desulfobacterium autotrophicum), this protein is Probable transcriptional regulatory protein HRM2_04000.